We begin with the raw amino-acid sequence, 348 residues long: WRKY transcription factor WRKY71 (348 aa).

A coiled-coil region spans residues 50–84; sequence VAALEAELKRMGAENRQLSEMLAAVAAKYEALQSQ. Disordered stretches follow at residues 91-141 and 246-287; these read ASAN…APHH and GEHN…APVV. Positions 102–114 are enriched in low complexity; the sequence is NQSSTSEGGSVSP. The Nuclear localization signal signature appears at 116–122; the sequence is RKRKSES. Over residues 126–136 the composition is skewed to pro residues; the sequence is SPPPPPPPHPH. The WRKY DNA-binding region spans 187-253; that stretch reads DLSLVVKDGY…YEGEHNHGQP (67 aa). Positions 267–348 are transcription repression of gibberellic acid (GA)-induced promoters; the sequence is SGKSAGKPPH…RILELSPTKD (82 aa). Residues 275 to 286 show a composition bias toward pro residues; the sequence is PHAPAAAPPAPV.

Belongs to the WRKY group II-a family. As to quaternary structure, interacts with WRKY51; this interaction promotes W box binding of the complex WRKY51/WRKY71 in a zinc ion-dependent manner. Highly expressed in aleurone cells. In seeds, predominantly present in the plumule, radicle and scutellum of the embryo. Expressed in roots, stems, young leaves and spikelets.

It is found in the nucleus. Functionally, transcription repressor. Interacts specifically with the W box (5'-(T)TGAC[CT]-3'), a frequently occurring elicitor-responsive cis-acting element. Represses specifically gibberellic acid (GA)-induced promoters in aleurone cells, probably by interfering with GAM1. Regulates, probably indirectly, the activation of defense-related genes such as GF14E during defense response. Modulates plant innate immunity against X.oryzae pv. oryzae (Xoo). Confers resistance to the virulent bacterial pathogen X.oryzae pv. oryzae (Xoo) 13751, probably via the regulation of NPR1 and PR1b defense signaling pathways. The polypeptide is WRKY transcription factor WRKY71 (Oryza sativa subsp. indica (Rice)).